The primary structure comprises 552 residues: Non-structural protein NS1 (552 aa).

It belongs to the orbivirus non-structural protein NS1 family.

The sequence is that of Non-structural protein NS1 (Segment-5) from Bluetongue virus 10 (isolate USA) (BTV 10).